The sequence spans 245 residues: Probable phosphatase YcdX (245 aa).

Zn(2+) is bound by residues histidine 7, histidine 9, histidine 15, histidine 40, glutamate 73, histidine 101, histidine 131, aspartate 192, and histidine 194.

Belongs to the PHP family. As to quaternary structure, homotrimer. Requires Zn(2+) as cofactor.

The polypeptide is Probable phosphatase YcdX (Escherichia coli O139:H28 (strain E24377A / ETEC)).